The sequence spans 141 residues: 3-hydroxyacyl-[acyl-carrier-protein] dehydratase FabZ (141 aa).

His-49 is an active-site residue.

This sequence belongs to the thioester dehydratase family. FabZ subfamily.

Its subcellular location is the cytoplasm. The catalysed reaction is a (3R)-hydroxyacyl-[ACP] = a (2E)-enoyl-[ACP] + H2O. Functionally, involved in unsaturated fatty acids biosynthesis. Catalyzes the dehydration of short chain beta-hydroxyacyl-ACPs and long chain saturated and unsaturated beta-hydroxyacyl-ACPs. The polypeptide is 3-hydroxyacyl-[acyl-carrier-protein] dehydratase FabZ (Fusobacterium nucleatum subsp. nucleatum (strain ATCC 25586 / DSM 15643 / BCRC 10681 / CIP 101130 / JCM 8532 / KCTC 2640 / LMG 13131 / VPI 4355)).